The primary structure comprises 317 residues: Olfactory receptor 6Q1 (317 aa).

The Extracellular portion of the chain corresponds to 1–27 (MQPYTKNWTQVTEFVMMGFAGIHEAHL). N-linked (GlcNAc...) asparagine glycosylation is present at N7. Residues 28–48 (LFFILFLTMYLFTLVENLAII) traverse the membrane as a helical segment. The Cytoplasmic portion of the chain corresponds to 49-56 (LVVGLDHR). A helical membrane pass occupies residues 57-77 (LRRPMYFFLTHLSCLEIWYTS). Topologically, residues 78–103 (VTVPKMLAGFIGVDGGKNISYADCLS) are extracellular. A glycan (N-linked (GlcNAc...) asparagine) is linked at N95. C101 and C193 are joined by a disulfide. A helical membrane pass occupies residues 104-124 (QLFIFTFLGATECFLLAAMAY). Residues 125–143 (DRYVAICMPLHYGAFVSWG) lie on the Cytoplasmic side of the membrane. Residues 144–164 (TCIRLAAACWLVGFLTPILPI) form a helical membrane-spanning segment. The Extracellular portion of the chain corresponds to 165-201 (YLLSQLTFYGPNVIDHFSCDASPLLALSCSDVTWKET). A helical membrane pass occupies residues 202–221 (VDFLVSLAVLLASSMVIAVS). The Cytoplasmic segment spans residues 222 to 241 (YGNIVWTLLHIRSAAERWKA). The chain crosses the membrane as a helical span at residues 242-262 (FSTCAAHLTVVSLFYGTLFFM). The Extracellular segment spans residues 263-275 (YVQTKVTSSINFN). The helical transmembrane segment at 276–296 (KVVSVFYSVVTPMLNPLIYSL) threads the bilayer. The Cytoplasmic segment spans residues 297–317 (RNKEVKGALGRVFSLNFWKGQ).

This sequence belongs to the G-protein coupled receptor 1 family.

Its subcellular location is the cell membrane. Functionally, odorant receptor. This chain is Olfactory receptor 6Q1 (OR6Q1), found in Homo sapiens (Human).